Consider the following 237-residue polypeptide: MSDADVSKQIQQMVRFIRQEAEEKANEISVSAEEEFNIEKLQLVEAEKKKIRQEYEKKEKQVEIRKKIEYSMQLNASRIKVLQAQDDVVNAMKESASKDFLNVSHDHHVYKRLLKDLIVQSLVRLKEPGVLLRCRKEDLHLVESVLDSAKEEYASKVNVHPPEIIVDDVHLPPGPSHHHGFFHHHAEAHGPFCSGGVVIASRDGKIVFENTLDARLDVAFNKKLPEIRKWLFGQVAA.

The protein belongs to the V-ATPase E subunit family. In terms of assembly, V-ATPase is a heteromultimeric enzyme composed of a peripheral catalytic V1 complex (components A to H) attached to an integral membrane V0 proton pore complex (components: a, c, c', c'' and d).

Its function is as follows. Subunit of the peripheral V1 complex of vacuolar ATPase essential for assembly or catalytic function. V-ATPase is responsible for acidifying a variety of intracellular compartments in eukaryotic cells. The sequence is that of V-type proton ATPase subunit E (VATE) from Gossypium hirsutum (Upland cotton).